A 628-amino-acid polypeptide reads, in one-letter code: FAD-linked oxidoreductase hmp9 (628 aa).

The N-terminal stretch at 1 to 29 is a signal peptide; the sequence is MFCIIRAQLLLLLHLLVLALLLVGTVCNA. The disordered stretch occupies residues 34–53; that stretch reads GHPSELEPLALKRGGSPRDD. N-linked (GlcNAc...) asparagine glycosylation is found at N80 and N133. The FAD-binding PCMH-type domain occupies 152–337; the sequence is LGQLPVYAID…LKTKIKAYPN (186 aa). N356 is a glycosylation site (N-linked (GlcNAc...) asparagine).

Belongs to the oxygen-dependent FAD-linked oxidoreductase family.

The protein operates within secondary metabolite biosynthesis. In terms of biological role, FAD-linked oxidoreductase; part of the gene cluster that mediates the biosynthesis of hypothemycin, a resorcylic acid lactone (RAL) that irreversibly inhibits a subset of protein kinases with a conserved cysteine in the ATP binding site such as human ERK2. The first step is performed by both PKSs hmp3 and hmp8 and leads to the production of 7',8'-dehydrozearalenol (DHZ). The highly reducing PKS hpm8 synthesizes the reduced hexaketide (7S,11S,2E,8E)-7,11-dihydroxy-dodeca-2,8-dienoate, which is transferred downstream to the non-reducing PKS hpm3. Hpm3 then extends the reduced hexaketide to a nonaketide, after which regioselective cyclization and macrolactonization affords DHZ. The next step is the conversion of DHZ into aigialomycin C and is performed by the O-methyltransferase hmp5, the FAD-binding monooxygenase hmp7, and the cytochrome P450 monooxygenase hmp1. The wide substrate tolerance of the hmp5 and hmp7 implies that the reactions from DHZ to aigialomycin C can occur in any order. The steps from aigialomycin C to hypothemycin are less well established. The FAD-linked oxidoreductase hmp9 presumably catalyzes oxidation of the C-6' hydroxyl to a ketone. The timing of this oxidation is important, since the resulting enone functional group is a Michael acceptor that can react spontaneously with glutathione, an abundant metabolite in fungal cells. The glutathione S-transferase hmp2 catalyzes cis-trans isomerization of the 7',8' double bond with equilibrium favoring the trans isomer. The hpm6-encoded transporter might preferentially pump hypothemycin out of the cell relative to the trans isomer aigialomycin A. The cis-to-trans isomerization may be coupled with C-4' hydroxylation, since all known hypothemycin analogs containing the enone functional group also have hydroxyl groups at both C-4' and C-5'. This chain is FAD-linked oxidoreductase hmp9, found in Hypomyces subiculosus (Nectria subiculosa).